Here is a 103-residue protein sequence, read N- to C-terminus: MTIMLEAYLTLAAVLFCIGVWGLINSRNAVRVLMSIELMLNAVNINLMAFSNYLDGELIRGQVFAIFVITVAAAEAAVGLAILLSLYRNRQTVDMERFNLLRW.

The next 3 membrane-spanning stretches (helical) occupy residues 3-23 (IMLE…VWGL), 32-52 (VLMS…AFSN), and 63-83 (VFAI…LAIL).

It belongs to the complex I subunit 4L family. In terms of assembly, NDH is composed of at least 16 different subunits, 5 of which are encoded in the nucleus.

The protein resides in the plastid. It localises to the organellar chromatophore thylakoid membrane. It catalyses the reaction a plastoquinone + NADH + (n+1) H(+)(in) = a plastoquinol + NAD(+) + n H(+)(out). The enzyme catalyses a plastoquinone + NADPH + (n+1) H(+)(in) = a plastoquinol + NADP(+) + n H(+)(out). Functionally, NDH shuttles electrons from NAD(P)H:plastoquinone, via FMN and iron-sulfur (Fe-S) centers, to quinones in the photosynthetic chain and possibly in a chloroplast respiratory chain. The immediate electron acceptor for the enzyme in this species is believed to be plastoquinone. Couples the redox reaction to proton translocation, and thus conserves the redox energy in a proton gradient. This Paulinella chromatophora protein is NAD(P)H-quinone oxidoreductase subunit 4L, organellar chromatophore.